The chain runs to 452 residues: Bifunctional protein GlmU (452 aa).

The tract at residues 1 to 226 (MSLAVVILAA…GWEVDGVNDR (226 aa)) is pyrophosphorylase. UDP-N-acetyl-alpha-D-glucosamine-binding positions include 8–11 (LAAG), Lys-22, Gln-73, 78–79 (GT), 99–101 (YGD), Gly-136, Glu-151, Asn-166, and Asn-224. Asp-101 lines the Mg(2+) pocket. Asn-224 contributes to the Mg(2+) binding site. The segment at 227-247 (VQLARLERIYQQAQAETLMRD) is linker. The segment at 248-452 (GVTLLDPSRL…VANWQRPKKG (205 aa)) is N-acetyltransferase. UDP-N-acetyl-alpha-D-glucosamine contacts are provided by Arg-330 and Lys-348. The active-site Proton acceptor is the His-360. Tyr-363 and Asn-374 together coordinate UDP-N-acetyl-alpha-D-glucosamine. Residues Ala-377, 383–384 (NY), Ser-402, Ala-420, and Arg-437 contribute to the acetyl-CoA site.

It in the N-terminal section; belongs to the N-acetylglucosamine-1-phosphate uridyltransferase family. The protein in the C-terminal section; belongs to the transferase hexapeptide repeat family. As to quaternary structure, homotrimer. Mg(2+) serves as cofactor.

Its subcellular location is the cytoplasm. It carries out the reaction alpha-D-glucosamine 1-phosphate + acetyl-CoA = N-acetyl-alpha-D-glucosamine 1-phosphate + CoA + H(+). The catalysed reaction is N-acetyl-alpha-D-glucosamine 1-phosphate + UTP + H(+) = UDP-N-acetyl-alpha-D-glucosamine + diphosphate. It functions in the pathway nucleotide-sugar biosynthesis; UDP-N-acetyl-alpha-D-glucosamine biosynthesis; N-acetyl-alpha-D-glucosamine 1-phosphate from alpha-D-glucosamine 6-phosphate (route II): step 2/2. The protein operates within nucleotide-sugar biosynthesis; UDP-N-acetyl-alpha-D-glucosamine biosynthesis; UDP-N-acetyl-alpha-D-glucosamine from N-acetyl-alpha-D-glucosamine 1-phosphate: step 1/1. Its pathway is bacterial outer membrane biogenesis; LPS lipid A biosynthesis. In terms of biological role, catalyzes the last two sequential reactions in the de novo biosynthetic pathway for UDP-N-acetylglucosamine (UDP-GlcNAc). The C-terminal domain catalyzes the transfer of acetyl group from acetyl coenzyme A to glucosamine-1-phosphate (GlcN-1-P) to produce N-acetylglucosamine-1-phosphate (GlcNAc-1-P), which is converted into UDP-GlcNAc by the transfer of uridine 5-monophosphate (from uridine 5-triphosphate), a reaction catalyzed by the N-terminal domain. This Alcanivorax borkumensis (strain ATCC 700651 / DSM 11573 / NCIMB 13689 / SK2) protein is Bifunctional protein GlmU.